The chain runs to 688 residues: MTTQNFLVEIGTEELPPKALKTLATSFADNVEAELIQAGLSFDKIEWFAAPRRLAVKVLNLATQQPSKEIEKRGPAVSAAFDAEGKPTKAAEGWARGCGITVEQAERIATDKGEWLVHCAKIEGQPTKNLLNDIVANALAKLPIPKPMRWADKTVQFIRPVHTVTMLLGDELIEGEILGVASARTIRGHRFLGEKEFEIQHADQYPQLLREKGSVVADFNERKAEILAKSQAKATALGGVADIEESLLEEVTSLVEYPNVLAAKFEERFLAVPAEALVYTMKGDQKYFPIYDKDGKLLPHFIFVSNINPEDPTAIIEGNEKVVRPRLTDAEFFFKTDLKQKLVDRLPRLETVLFQQQLGTLKDKTDRIEQLAGEIAKQIGADEAKAKRAGLLSKCDLMTNMVFEFTDTQGVMGMHYARHDGEDEEVAVALNEQYMPRFAGDELPKSLVASAVALADKFDTLTGIFGIGQAPKGSADPFALRRAALGALRIIVEKNLPLDLEDLVKKSAALFSDKLTNKNVVADVVDFMLGRFRAWYQDEGIAVDVIQAVLARRPTRPADFDARVRAVSHFRTLDSAEALAAANKRVSNILAKADAAIGEINLTACVEPAEKALAEAVLVLRTEVQPLIAQGDYTAVLDKLANLRAPVDSFFDNVMVNAEDPALRQNRLAILNTLQGLFLQVADISVLQ.

The protein belongs to the class-II aminoacyl-tRNA synthetase family. Tetramer of two alpha and two beta subunits.

The protein localises to the cytoplasm. It carries out the reaction tRNA(Gly) + glycine + ATP = glycyl-tRNA(Gly) + AMP + diphosphate. This is Glycine--tRNA ligase beta subunit from Haemophilus influenzae (strain PittEE).